A 740-amino-acid polypeptide reads, in one-letter code: Phosphoribosylformylglycinamidine synthase subunit PurL (740 aa).

Residue His-55 is part of the active site. Residues Tyr-58 and Lys-97 each contribute to the ATP site. Glu-99 is a binding site for Mg(2+). Substrate is bound by residues 100–103 (SHNH) and Arg-122. The Proton acceptor role is filled by His-101. Asp-123 lines the Mg(2+) pocket. Position 246 (Gln-246) interacts with substrate. Asp-276 contributes to the Mg(2+) binding site. 320 to 322 (ESQ) serves as a coordination point for substrate. Positions 501 and 538 each coordinate ATP. Asn-539 is a Mg(2+) binding site. Position 541 (Ser-541) interacts with substrate.

The protein belongs to the FGAMS family. In terms of assembly, monomer. Part of the FGAM synthase complex composed of 1 PurL, 1 PurQ and 2 PurS subunits.

It is found in the cytoplasm. It carries out the reaction N(2)-formyl-N(1)-(5-phospho-beta-D-ribosyl)glycinamide + L-glutamine + ATP + H2O = 2-formamido-N(1)-(5-O-phospho-beta-D-ribosyl)acetamidine + L-glutamate + ADP + phosphate + H(+). It functions in the pathway purine metabolism; IMP biosynthesis via de novo pathway; 5-amino-1-(5-phospho-D-ribosyl)imidazole from N(2)-formyl-N(1)-(5-phospho-D-ribosyl)glycinamide: step 1/2. In terms of biological role, part of the phosphoribosylformylglycinamidine synthase complex involved in the purines biosynthetic pathway. Catalyzes the ATP-dependent conversion of formylglycinamide ribonucleotide (FGAR) and glutamine to yield formylglycinamidine ribonucleotide (FGAM) and glutamate. The FGAM synthase complex is composed of three subunits. PurQ produces an ammonia molecule by converting glutamine to glutamate. PurL transfers the ammonia molecule to FGAR to form FGAM in an ATP-dependent manner. PurS interacts with PurQ and PurL and is thought to assist in the transfer of the ammonia molecule from PurQ to PurL. This chain is Phosphoribosylformylglycinamidine synthase subunit PurL, found in Lacticaseibacillus casei (Lactobacillus casei).